We begin with the raw amino-acid sequence, 184 residues long: Large ribosomal subunit protein uL6 (184 aa).

This sequence belongs to the universal ribosomal protein uL6 family. In terms of assembly, part of the 50S ribosomal subunit.

This protein binds to the 23S rRNA, and is important in its secondary structure. It is located near the subunit interface in the base of the L7/L12 stalk, and near the tRNA binding site of the peptidyltransferase center. The sequence is that of Large ribosomal subunit protein uL6 from Thermomicrobium roseum (strain ATCC 27502 / DSM 5159 / P-2).